The sequence spans 457 residues: UDP-glucosyltransferase 45 (457 aa).

Histidine 21 (proton acceptor) is an active-site residue. An anthocyanidin is bound at residue histidine 21. Residue aspartate 112 is the Charge relay of the active site. Residues threonine 134, glutamine 336, histidine 351, tryptophan 354, asparagine 355, serine 356, glutamate 359, aspartate 375, and glutamine 376 each coordinate UDP-alpha-D-glucose.

This sequence belongs to the UDP-glycosyltransferase family.

It carries out the reaction (20S)-protopanaxadiol + UDP-alpha-D-glucose = (20S)-ginsenoside Rh2 + UDP + H(+). It functions in the pathway secondary metabolite biosynthesis; terpenoid biosynthesis. Its function is as follows. Component of the triterpene saponins (e.g. PPD-type ginsenosides) biosynthetic pathway. Glycosyltransferase that catalyzes the biosynthesis of ginsenoside Rh2 from protopanaxadiol (PPD). This chain is UDP-glucosyltransferase 45, found in Panax ginseng (Korean ginseng).